The chain runs to 92 residues: UPF0223 protein SUB0967 (92 aa).

Belongs to the UPF0223 family.

This is UPF0223 protein SUB0967 from Streptococcus uberis (strain ATCC BAA-854 / 0140J).